We begin with the raw amino-acid sequence, 322 residues long: MLFATLEHILTHISFSTISIVITIHLITLLVRELGRLRDSSEKGMIVTFFSITGFLVSRWVSSGHFPLSNLYESLIFLSWALYILHTIPKIQNSKNDLSTITTPSTILTQGFATSGLLTEMHQSTILVPALQSQWLMMHVSMMLLSYATLLCGSLLSAAILIIRFRNNFHFFSKKKKNVLNKTFFFSEIAFFYAKRSALKSAPVPSFPNYYKYQLTERLDSWSYRIISLGFTLLTIGILCGAVWANEAWGSYWNWDPKETWAFITWTIFAIYLHSRTNPNWKGTNSALIASIGFLIIWICYFGINLLGIGLHSYGSFTLTPK.

The next 7 membrane-spanning stretches (helical) occupy residues 9 to 29 (ILTHISFSTISIVITIHLITL), 44 to 64 (GMIVTFFSITGFLVSRWVSSG), 68 to 88 (LSNLYESLIFLSWALYILHTI), 143 to 163 (MLLSYATLLCGSLLSAAILII), 226 to 246 (IISLGFTLLTIGILCGAVWAN), 260 to 274 (TWAFITWTIFAIYLH), and 289 to 309 (IASIGFLIIWICYFGINLLGI).

Belongs to the CcmF/CycK/Ccl1/NrfE/CcsA family. As to quaternary structure, may interact with Ccs1.

The protein resides in the plastid. It localises to the chloroplast thylakoid membrane. Its function is as follows. Required during biogenesis of c-type cytochromes (cytochrome c6 and cytochrome f) at the step of heme attachment. This is Cytochrome c biogenesis protein CcsA from Hordeum vulgare (Barley).